We begin with the raw amino-acid sequence, 386 residues long: 3-hydroxyisobutyryl-CoA hydrolase, mitochondrial (386 aa).

The transit peptide at 1–32 directs the protein to the mitochondrion; the sequence is MGLQGLCRLMSRFNSYKRTNIILQHLKMSNHT. Lysine 92 is modified (N6-acetyllysine; alternate). Lysine 92 is modified (N6-succinyllysine; alternate). Residues glutamate 121, glycine 146, glutamate 169, and aspartate 177 each coordinate substrate. The residue at position 221 (lysine 221) is an N6-acetyllysine; alternate. The residue at position 221 (lysine 221) is an N6-succinyllysine; alternate. The residue at position 234 (serine 234) is a Phosphoserine. N6-succinyllysine is present on residues lysine 250 and lysine 257. Lysine 297 carries the post-translational modification N6-acetyllysine; alternate. Position 297 is an N6-succinyllysine; alternate (lysine 297). Lysine 301 bears the N6-succinyllysine mark. An N6-acetyllysine; alternate modification is found at lysine 353. Lysine 353 is modified (N6-succinyllysine; alternate). Serine 356 is modified (phosphoserine). N6-acetyllysine is present on residues lysine 360 and lysine 365. At lysine 377 the chain carries N6-succinyllysine.

The protein belongs to the enoyl-CoA hydratase/isomerase family.

Its subcellular location is the mitochondrion. It catalyses the reaction 3-hydroxy-2-methylpropanoyl-CoA + H2O = 3-hydroxy-2-methylpropanoate + CoA + H(+). Its pathway is amino-acid degradation; L-valine degradation. Functionally, hydrolyzes 3-hydroxyisobutyryl-CoA (HIBYL-CoA), a saline catabolite. Has high activity toward isobutyryl-CoA. Could be an isobutyryl-CoA dehydrogenase that functions in valine catabolism. Also hydrolyzes 3-hydroxypropanoyl-CoA. The polypeptide is 3-hydroxyisobutyryl-CoA hydrolase, mitochondrial (HIBCH) (Bos taurus (Bovine)).